The chain runs to 654 residues: MVQKKYCEAIHQTERRPTRIVNVGNVGIGGNHPIRIQSMTTSSTRDVEATIEQVIRLADQGCEIVRVTVQGIKEADACEHIKKGLIKRGYQIPLVADIHFYPPAAMRVVDFVDKVRINPGNFVDKRASFKQIVYDDESYAREIERIEEKFTPLVEKCKRLNRAMRIGTNHGSLSDRIMNRYGDTPFGMVESALEFARICRKNDYHNFLFSMKASNPQVMIQAYRLLTQAMYALEWDYPLHLGVTEAGEGEDGRIKSAMGIGSLLIDGIGDTIRVSLTEDPWHEINPCQRLIKLASAYQQQGVAPFIENYRQIEAIERRQVHLSSTVPMHRDGTVFISLPINMLKEASLYQQIGCEGPFGKPKLKTATADNLVLKNPNSDSEEKRQLQILKDLGIGLFSKDPFEMSLVIHPLKKWLQSRAVDSFASRFSSSWAKSAGQPLIIQITDETEKEWKEVISLKPQLIILSPSTNRLHYSRQFFEWLQQNQLNYPVILNFTYQGENEDTILLASMECGSLLCDGLGEGVWLEGPYDILFLRQLSFSILQAARLRMSKTDFISCPSCGRTLFNLQDVTKRIQSRTSHLPGVKIAIMGCIVNGPGEMADADFGYVGSKPGKIDLYVGKECVEKDIDFADADDRLVNLIRAHGRWIEPQTVNA.

4 residues coordinate [4Fe-4S] cluster: cysteine 557, cysteine 560, cysteine 591, and glutamate 598.

This sequence belongs to the IspG family. Requires [4Fe-4S] cluster as cofactor.

The catalysed reaction is (2E)-4-hydroxy-3-methylbut-2-enyl diphosphate + oxidized [flavodoxin] + H2O + 2 H(+) = 2-C-methyl-D-erythritol 2,4-cyclic diphosphate + reduced [flavodoxin]. The protein operates within isoprenoid biosynthesis; isopentenyl diphosphate biosynthesis via DXP pathway; isopentenyl diphosphate from 1-deoxy-D-xylulose 5-phosphate: step 5/6. Converts 2C-methyl-D-erythritol 2,4-cyclodiphosphate (ME-2,4cPP) into 1-hydroxy-2-methyl-2-(E)-butenyl 4-diphosphate. The sequence is that of 4-hydroxy-3-methylbut-2-en-1-yl diphosphate synthase (flavodoxin) from Protochlamydia amoebophila (strain UWE25).